A 364-amino-acid polypeptide reads, in one-letter code: WAT1-related protein At5g47470 (364 aa).

Transmembrane regions (helical) follow at residues 28–48, 59–79, 93–113, 124–144, 158–178, 197–217, 228–248, 255–275, 293–313, and 319–339; these read MVIV…SLLM, FTIV…FAIL, LIGK…SLFL, ATAM…IVGL, ILGT…HSTS, VVGC…VVLQ, ISLS…VLLL, VLAS…LAGA, PVFV…FAVL, and VSLG…LVLW. The 133-residue stretch at 40–172 folds into the EamA 1 domain; that stretch reads VYAGNSLLMS…LCVFGALAMS (133 aa). One can recognise an EamA 2 domain in the interval 219–338; it reads STLAEFPAPI…LMFVGLYLVL (120 aa).

The protein belongs to the drug/metabolite transporter (DMT) superfamily. Plant drug/metabolite exporter (P-DME) (TC 2.A.7.4) family.

It localises to the membrane. This chain is WAT1-related protein At5g47470, found in Arabidopsis thaliana (Mouse-ear cress).